Reading from the N-terminus, the 327-residue chain is Serpentine receptor class alpha-33 (327 aa).

Transmembrane regions (helical) follow at residues 20–40 (FSVYFIDTSCIISMAVTVLAI), 56–76 (LLITDLVFINIHNLSYIFLQN), 133–153 (FSHANYGFLLAILSLIASTVF), 186–206 (IIPYLAICLTSIVCSLLLIIY), 227–247 (AVVSSISVAILGIIQLVLFCF), and 270–290 (IIGWFYTSPLNAIISPTAVFL).

This sequence belongs to the nematode receptor-like protein sra family.

Its subcellular location is the membrane. This is Serpentine receptor class alpha-33 (sra-33) from Caenorhabditis elegans.